Consider the following 338-residue polypeptide: uncharacterized protein (338 aa).

This is an uncharacterized protein from Acanthamoeba polyphaga (Amoeba).